Consider the following 245-residue polypeptide: Orotidine 5'-phosphate decarboxylase (245 aa).

Substrate is bound by residues Asp22, Lys44, 71 to 80 (DLKFHDIPNT), Thr131, Arg192, Gln201, Gly221, and Arg222. Lys73 acts as the Proton donor in catalysis.

It belongs to the OMP decarboxylase family. Type 1 subfamily. As to quaternary structure, homodimer.

It catalyses the reaction orotidine 5'-phosphate + H(+) = UMP + CO2. It functions in the pathway pyrimidine metabolism; UMP biosynthesis via de novo pathway; UMP from orotate: step 2/2. In terms of biological role, catalyzes the decarboxylation of orotidine 5'-monophosphate (OMP) to uridine 5'-monophosphate (UMP). The protein is Orotidine 5'-phosphate decarboxylase of Yersinia pseudotuberculosis serotype O:3 (strain YPIII).